Here is a 265-residue protein sequence, read N- to C-terminus: MICOS complex subunit Mic27 (265 aa).

The N-terminal 27 residues, Met1–Lys27, are a transit peptide targeting the mitochondrion. Residues Glu28–Asp110 lie on the Mitochondrial intermembrane side of the membrane. A helical transmembrane segment spans residues Phe111 to Ala129. Over Arg130–Lys137 the chain is Mitochondrial matrix. A helical membrane pass occupies residues Ile138–Ala155. Over Gln156 to Ser265 the chain is Mitochondrial intermembrane. Disordered regions lie at residues Ser187–Lys215 and Val229–Ser265. Ser204 is subject to Phosphoserine. The span at Val229–Phe241 shows a compositional bias: polar residues. Basic and acidic residues predominate over residues Lys246–Ser265.

The protein belongs to the apolipoprotein O/MICOS complex subunit Mic27 family. Component of the mitochondrial contact site and cristae organizing system (MICOS) complex, composed of at least MICOS10/MIC10, CHCHD3/MIC19, CHCHD6/MIC25, APOOL/MIC27, IMMT/MIC60, APOO/MIC23/MIC26 and MICOS13/MIC13. This complex was also known under the names MINOS or MitOS complex. The MICOS complex associates with mitochondrial outer membrane proteins SAMM50, MTX1 and MTX2 (together described as components of the mitochondrial outer membrane sorting assembly machinery (SAM) complex) and DNAJC11, mitochondrial inner membrane protein TMEM11 and with HSPA9. The MICOS and SAM complexes together with DNAJC11 are part of a large protein complex spanning both membranes termed the mitochondrial intermembrane space bridging (MIB) complex. Interacts with MICOS10/MIC10, IMMT/MIC60 and APOO/MIC23/MIC26.

Its subcellular location is the mitochondrion inner membrane. The protein localises to the mitochondrion. Its function is as follows. Component of the MICOS complex, a large protein complex of the mitochondrial inner membrane that plays crucial roles in the maintenance of crista junctions, inner membrane architecture, and formation of contact sites to the outer membrane. Specifically binds to cardiolipin (in vitro) but not to the precursor lipid phosphatidylglycerol. Plays a crucial role in crista junction formation and mitochondrial function. The polypeptide is MICOS complex subunit Mic27 (Apool) (Mus musculus (Mouse)).